Reading from the N-terminus, the 49-residue chain is Large ribosomal subunit protein bL32 (49 aa).

It belongs to the bacterial ribosomal protein bL32 family.

This Helicobacter hepaticus (strain ATCC 51449 / 3B1) protein is Large ribosomal subunit protein bL32.